Reading from the N-terminus, the 311-residue chain is N-acetyl-gamma-glutamyl-phosphate reductase (311 aa).

C117 is an active-site residue.

This sequence belongs to the NAGSA dehydrogenase family. Type 2 subfamily.

It is found in the cytoplasm. It catalyses the reaction N-acetyl-L-glutamate 5-semialdehyde + phosphate + NADP(+) = N-acetyl-L-glutamyl 5-phosphate + NADPH + H(+). It participates in amino-acid biosynthesis; L-arginine biosynthesis; N(2)-acetyl-L-ornithine from L-glutamate: step 3/4. Functionally, catalyzes the NADPH-dependent reduction of N-acetyl-5-glutamyl phosphate to yield N-acetyl-L-glutamate 5-semialdehyde. The polypeptide is N-acetyl-gamma-glutamyl-phosphate reductase (Brucella anthropi (strain ATCC 49188 / DSM 6882 / CCUG 24695 / JCM 21032 / LMG 3331 / NBRC 15819 / NCTC 12168 / Alc 37) (Ochrobactrum anthropi)).